The chain runs to 242 residues: 7-cyano-7-deazaguanine synthase (242 aa).

12 to 22 provides a ligand contact to ATP; sequence FSGGQDSTTCL. Zn(2+) contacts are provided by cysteine 200, cysteine 215, cysteine 218, and cysteine 221.

The protein belongs to the QueC family. Requires Zn(2+) as cofactor.

The enzyme catalyses 7-carboxy-7-deazaguanine + NH4(+) + ATP = 7-cyano-7-deazaguanine + ADP + phosphate + H2O + H(+). It functions in the pathway purine metabolism; 7-cyano-7-deazaguanine biosynthesis. Its function is as follows. Catalyzes the ATP-dependent conversion of 7-carboxy-7-deazaguanine (CDG) to 7-cyano-7-deazaguanine (preQ(0)). The chain is 7-cyano-7-deazaguanine synthase from Nitratidesulfovibrio vulgaris (strain ATCC 29579 / DSM 644 / CCUG 34227 / NCIMB 8303 / VKM B-1760 / Hildenborough) (Desulfovibrio vulgaris).